We begin with the raw amino-acid sequence, 380 residues long: cAMP-dependent protein kinase type I-alpha regulatory subunit (380 aa).

Met1 carries the N-acetylmethionine modification. The residue at position 2 (Ala2) is an N-acetylalanine; in cAMP-dependent protein kinase type I-alpha regulatory subunit, N-terminally processed. Residues 2 to 135 form a dimerization and phosphorylation region; that stretch reads ASGTTASEEE…ALAKAIEKNV (134 aa). Phosphoserine is present on residues Ser3, Ser76, and Ser82. Residues 64–96 form a disordered region; the sequence is IQNLQKAGSRADSREDEISPPPPNPVVKGRRRR. The Pseudophosphorylation motif signature appears at 95-99; it reads RRGAI. Residue Ser100 is modified to Phosphoserine. 3',5'-cyclic AMP-binding positions include 136–253, Glu201, Arg210, 254–380, Glu325, and Arg334; these read LFSH…SKVS and ILES…SLSV. At Ser257 the chain carries Phosphoserine.

Belongs to the cAMP-dependent kinase regulatory chain family. As to quaternary structure, the inactive holoenzyme is composed of two regulatory chains and two catalytic chains. Activation by cAMP releases the two active catalytic monomers and the regulatory dimer. Interacts with PRKACA and PRKACB. PRKAR1A also interacts with RFC2; the complex may be involved in cell survival. Interacts with AKAP4. Interacts with RARA; the interaction occurs in the presence of cAMP or FSH and regulates RARA transcriptional activity. Interacts with the phosphorylated form of PJA2. Interacts with CBFA2T3. Interacts with PRKX; regulates this cAMP-dependent protein kinase. Interacts with smAKAP; this interaction may target PRKAR1A to the plasma membrane. Interacts with AICDA. Post-translationally, the pseudophosphorylation site binds to the substrate-binding region of the catalytic chain, resulting in the inhibition of its activity. The physiological significance of the in vitro phosphorylation of a proximal serine is unclear. Four types of regulatory chains are found: I-alpha, I-beta, II-alpha, and II-beta. Their expression varies among tissues and is in some cases constitutive and in others inducible.

It localises to the cell membrane. Functionally, regulatory subunit of the cAMP-dependent protein kinases involved in cAMP signaling in cells. The protein is cAMP-dependent protein kinase type I-alpha regulatory subunit (PRKAR1A) of Bos taurus (Bovine).